Here is a 171-residue protein sequence, read N- to C-terminus: Transcriptional repressor NrdR (171 aa).

Residues 1-21 (MQCPHCQHTDSRVLESRSSEN) form a disordered region. The segment at 3–34 (CPHCQHTDSRVLESRSSENGQSIRRRRECLQC) is a zinc-finger region. Over residues 7–18 (QHTDSRVLESRS) the composition is skewed to basic and acidic residues. The ATP-cone domain occupies 49–139 (ITVIKKDGKR…VYGNFQGIRD (91 aa)).

Belongs to the NrdR family. Zn(2+) serves as cofactor.

Functionally, negatively regulates transcription of bacterial ribonucleotide reductase nrd genes and operons by binding to NrdR-boxes. This chain is Transcriptional repressor NrdR, found in Microcystis aeruginosa (strain NIES-843 / IAM M-2473).